A 240-amino-acid polypeptide reads, in one-letter code: UDP-2,3-diacylglucosamine hydrolase (240 aa).

Mn(2+) contacts are provided by Asp8, His10, Asp41, Asn79, and His114. A substrate-binding site is contributed by 79–80; sequence NR. Substrate contacts are provided by Asp122, Ser160, Asn164, Lys167, and His195. Mn(2+) is bound by residues His195 and His197.

The protein belongs to the LpxH family. Mn(2+) is required as a cofactor.

It is found in the cell inner membrane. The enzyme catalyses UDP-2-N,3-O-bis[(3R)-3-hydroxytetradecanoyl]-alpha-D-glucosamine + H2O = 2-N,3-O-bis[(3R)-3-hydroxytetradecanoyl]-alpha-D-glucosaminyl 1-phosphate + UMP + 2 H(+). The protein operates within glycolipid biosynthesis; lipid IV(A) biosynthesis; lipid IV(A) from (3R)-3-hydroxytetradecanoyl-[acyl-carrier-protein] and UDP-N-acetyl-alpha-D-glucosamine: step 4/6. Functionally, hydrolyzes the pyrophosphate bond of UDP-2,3-diacylglucosamine to yield 2,3-diacylglucosamine 1-phosphate (lipid X) and UMP by catalyzing the attack of water at the alpha-P atom. Involved in the biosynthesis of lipid A, a phosphorylated glycolipid that anchors the lipopolysaccharide to the outer membrane of the cell. This Shigella dysenteriae serotype 1 (strain Sd197) protein is UDP-2,3-diacylglucosamine hydrolase.